The chain runs to 340 residues: Pseudaminic acid synthase (340 aa).

The AFP-like domain maps to 281–337 (SLFVIKDIQKGEALTENNIKALRPNLGLHPKFYKEILGQKASKFLKANTPLSADDIE).

It belongs to the pseudaminic acid synthase family. A divalent metal cation is required as a cofactor.

The enzyme catalyses 2,4-diacetamido-2,4,6-trideoxy-beta-L-altrose + phosphoenolpyruvate + H2O = pseudaminate + phosphate. Functionally, catalyzes the fifth step in the biosynthesis of pseudaminic acid, a sialic-acid-like sugar that is used to modify flagellin. Catalyzes the condensation of phosphoenolpyruvate with 2,4-diacetamido-2,4,6-trideoxy-beta-l-altropyranose, forming pseudaminic acid. This Helicobacter pylori (strain ATCC 700392 / 26695) (Campylobacter pylori) protein is Pseudaminic acid synthase (pseI).